Here is a 59-residue protein sequence, read N- to C-terminus: Large ribosomal subunit protein bL32 (59 aa).

Residues 1–16 (MAVPKRKTSPSRRGMR) are compositionally biased toward basic residues. Positions 1 to 20 (MAVPKRKTSPSRRGMRRSHD) are disordered.

Belongs to the bacterial ribosomal protein bL32 family.

The protein is Large ribosomal subunit protein bL32 of Novosphingobium aromaticivorans (strain ATCC 700278 / DSM 12444 / CCUG 56034 / CIP 105152 / NBRC 16084 / F199).